A 334-amino-acid chain; its full sequence is Aspartate carbamoyltransferase catalytic subunit (334 aa).

2 residues coordinate carbamoyl phosphate: R70 and T71. Residue K98 coordinates L-aspartate. Residues R120, H150, and Q153 each coordinate carbamoyl phosphate. 2 residues coordinate L-aspartate: R183 and R238. G279 and P280 together coordinate carbamoyl phosphate.

Belongs to the aspartate/ornithine carbamoyltransferase superfamily. ATCase family. In terms of assembly, heterododecamer (2C3:3R2) of six catalytic PyrB chains organized as two trimers (C3), and six regulatory PyrI chains organized as three dimers (R2).

It carries out the reaction carbamoyl phosphate + L-aspartate = N-carbamoyl-L-aspartate + phosphate + H(+). It participates in pyrimidine metabolism; UMP biosynthesis via de novo pathway; (S)-dihydroorotate from bicarbonate: step 2/3. Its function is as follows. Catalyzes the condensation of carbamoyl phosphate and aspartate to form carbamoyl aspartate and inorganic phosphate, the committed step in the de novo pyrimidine nucleotide biosynthesis pathway. This Marinomonas sp. (strain MWYL1) protein is Aspartate carbamoyltransferase catalytic subunit.